The primary structure comprises 183 residues: I-kappa-B like protein N2 (183 aa).

ANK repeat units follow at residues 62–95 (DGNTCLHEAALRNKGPQAIRIMEKLIEYGADLNL) and 99–129 (CHKPVLHVAVERNDYELVAWICQQPGINLEA). A disordered region spans residues 163–183 (PRQDGSSEDEVSDSEEKSDSE).

Belongs to the polydnaviridae I-Kappa-B like protein family.

Suppresses the host immune response through NF-kappa-B inactivation. Possesses ankyrin repeat domains required for NF-kappa-B binding but lacks the regulatory regions required for dissociation from NF-kappa-B and degradation. Therefore, prevents host NF-kappa-B release and subsequent activation. In Microplitis demolitor (Parasitoid wasp), this protein is I-kappa-B like protein N2 (N5).